A 112-amino-acid chain; its full sequence is 2Fe-2S ferredoxin (112 aa).

One can recognise a 2Fe-2S ferredoxin-type domain in the interval 5-107; the sequence is IKVTFIINDG…GIKVRLPSAT (103 aa). Cys42, Cys48, Cys51, and Cys88 together coordinate [2Fe-2S] cluster.

This sequence belongs to the adrenodoxin/putidaredoxin family. [2Fe-2S] cluster is required as a cofactor.

Its function is as follows. Ferredoxin are iron-sulfur proteins that transfer electrons in a wide variety of metabolic reactions. This Rickettsia montanensis protein is 2Fe-2S ferredoxin (fdxB).